We begin with the raw amino-acid sequence, 272 residues long: MISIDSTAMKTNSFDLANLSQDDTALEIRNLDLRYGDKQALFNVSMKIPKKQVTAFIGPSGCGKSTLLRCINRMNDLVDNCHIDGEILLHGQNIYDKRIDVAALRRNVGMVFQRPNPFPKSIYENVVYGLRLQGINNRRELDEAAERSLRGAAIWDEVKDRLHDNAFGLSGGQQQRLVIARAIAIEPEVLLLDEPTSALDPISTLTIEELITELKTKYTVVIVTHNMQQAARVSDQTAFMYMGELVEYADTNTIFTTPKKRKTEDYITGRYG.

One can recognise an ABC transporter domain in the interval Leu-26 to Ile-267. An ATP-binding site is contributed by Gly-58 to Ser-65.

The protein belongs to the ABC transporter superfamily. Phosphate importer (TC 3.A.1.7) family. The complex is composed of two ATP-binding proteins (PstB), two transmembrane proteins (PstC and PstA) and a solute-binding protein (PstS).

Its subcellular location is the cell inner membrane. It carries out the reaction phosphate(out) + ATP + H2O = ADP + 2 phosphate(in) + H(+). Its function is as follows. Part of the ABC transporter complex PstSACB involved in phosphate import. Responsible for energy coupling to the transport system. The polypeptide is Phosphate import ATP-binding protein PstB 1 (Shewanella oneidensis (strain ATCC 700550 / JCM 31522 / CIP 106686 / LMG 19005 / NCIMB 14063 / MR-1)).